Here is a 572-residue protein sequence, read N- to C-terminus: Hemolysin-1 (572 aa).

In terms of biological role, bacterial hemolysins are exotoxins that attack blood cell membranes and cause cell rupture by mechanisms not clearly defined. In Aeromonas salmonicida, this protein is Hemolysin-1 (ash1).